The chain runs to 251 residues: E3 ubiquitin-protein ligase MARCHF3 (251 aa).

The segment at 61–121 adopts an RING-CH-type zinc-finger fold; it reads QSFNDRPMCR…ELCHFRFSVE (61 aa). Positions 69, 72, 85, 87, 95, 98, 111, and 114 each coordinate Zn(2+). Helical transmembrane passes span 143 to 163 and 180 to 200; these read LFGD…SGWL and AVGL…WTLV.

The protein localises to the cytoplasmic vesicle membrane. Its subcellular location is the early endosome membrane. It catalyses the reaction S-ubiquitinyl-[E2 ubiquitin-conjugating enzyme]-L-cysteine + [acceptor protein]-L-lysine = [E2 ubiquitin-conjugating enzyme]-L-cysteine + N(6)-ubiquitinyl-[acceptor protein]-L-lysine.. It functions in the pathway protein modification; protein ubiquitination. E3 ubiquitin-protein ligase which may be involved in endosomal trafficking. E3 ubiquitin ligases accept ubiquitin from an E2 ubiquitin-conjugating enzyme in the form of a thioester and then directly transfer the ubiquitin to targeted substrates. The sequence is that of E3 ubiquitin-protein ligase MARCHF3 (marchf3) from Xenopus tropicalis (Western clawed frog).